The following is a 156-amino-acid chain: 6,7-dimethyl-8-ribityllumazine synthase (156 aa).

Residues phenylalanine 22, 57–59 (AVE), and 81–83 (SVI) contribute to the 5-amino-6-(D-ribitylamino)uracil site. 86–87 (GT) serves as a coordination point for (2S)-2-hydroxy-3-oxobutyl phosphate. Residue histidine 89 is the Proton donor of the active site. Position 114 (phenylalanine 114) interacts with 5-amino-6-(D-ribitylamino)uracil. Arginine 128 contributes to the (2S)-2-hydroxy-3-oxobutyl phosphate binding site.

The protein belongs to the DMRL synthase family. As to quaternary structure, forms an icosahedral capsid composed of 60 subunits, arranged as a dodecamer of pentamers.

The enzyme catalyses (2S)-2-hydroxy-3-oxobutyl phosphate + 5-amino-6-(D-ribitylamino)uracil = 6,7-dimethyl-8-(1-D-ribityl)lumazine + phosphate + 2 H2O + H(+). It participates in cofactor biosynthesis; riboflavin biosynthesis; riboflavin from 2-hydroxy-3-oxobutyl phosphate and 5-amino-6-(D-ribitylamino)uracil: step 1/2. Its function is as follows. Catalyzes the formation of 6,7-dimethyl-8-ribityllumazine by condensation of 5-amino-6-(D-ribitylamino)uracil with 3,4-dihydroxy-2-butanone 4-phosphate. This is the penultimate step in the biosynthesis of riboflavin. This Aliivibrio fischeri (strain ATCC 700601 / ES114) (Vibrio fischeri) protein is 6,7-dimethyl-8-ribityllumazine synthase.